We begin with the raw amino-acid sequence, 346 residues long: Uroporphyrinogen decarboxylase (346 aa).

Substrate-binding positions include 21 to 25 (RQAGR), Asp71, Tyr146, Ser201, and His316.

This sequence belongs to the uroporphyrinogen decarboxylase family. In terms of assembly, homodimer.

The protein localises to the cytoplasm. It carries out the reaction uroporphyrinogen III + 4 H(+) = coproporphyrinogen III + 4 CO2. It functions in the pathway porphyrin-containing compound metabolism; protoporphyrin-IX biosynthesis; coproporphyrinogen-III from 5-aminolevulinate: step 4/4. Its function is as follows. Catalyzes the decarboxylation of four acetate groups of uroporphyrinogen-III to yield coproporphyrinogen-III. In Rickettsia rickettsii (strain Iowa), this protein is Uroporphyrinogen decarboxylase.